A 313-amino-acid polypeptide reads, in one-letter code: D-alanine--D-alanine ligase (313 aa).

The region spanning 108-308 (KLVWQQTGVP…YSELVVKVLS (201 aa)) is the ATP-grasp domain. Position 138-193 (138-193 (VAKLGLPLFVKPASEGSSVAVLKVKTADALPAALAEAATHDKIVIVEKSIEGGGEY)) interacts with ATP. Mg(2+) is bound by residues D262, E275, and N277.

It belongs to the D-alanine--D-alanine ligase family. Mg(2+) is required as a cofactor. Mn(2+) serves as cofactor.

Its subcellular location is the cytoplasm. It carries out the reaction 2 D-alanine + ATP = D-alanyl-D-alanine + ADP + phosphate + H(+). It functions in the pathway cell wall biogenesis; peptidoglycan biosynthesis. Cell wall formation. This Burkholderia multivorans (strain ATCC 17616 / 249) protein is D-alanine--D-alanine ligase.